The primary structure comprises 175 residues: Co-chaperone protein HscB homolog (175 aa).

Positions 7-79 constitute a J domain; sequence SHFALFNLPE…LKRARYLLSL (73 aa).

The protein belongs to the HscB family. In terms of assembly, interacts with HscA and stimulates its ATPase activity.

In terms of biological role, co-chaperone involved in the maturation of iron-sulfur cluster-containing proteins. Seems to help targeting proteins to be folded toward HscA. This is Co-chaperone protein HscB homolog from Paraburkholderia phymatum (strain DSM 17167 / CIP 108236 / LMG 21445 / STM815) (Burkholderia phymatum).